A 388-amino-acid polypeptide reads, in one-letter code: S-adenosylmethionine synthase (388 aa).

Residue His16 participates in ATP binding. A Mg(2+)-binding site is contributed by Asp18. Glu44 lines the K(+) pocket. Residues Glu57 and Gln100 each coordinate L-methionine. Residues 100–110 form a flexible loop region; it reads QSADIAQGVNE. ATP contacts are provided by residues 167-169, 233-234, Asp242, 248-249, Ala265, and Lys269; these read DAK, RF, and RK. Position 242 (Asp242) interacts with L-methionine. Lys273 contacts L-methionine.

Belongs to the AdoMet synthase family. In terms of assembly, homotetramer; dimer of dimers. Mg(2+) serves as cofactor. It depends on K(+) as a cofactor.

The protein localises to the cytoplasm. The enzyme catalyses L-methionine + ATP + H2O = S-adenosyl-L-methionine + phosphate + diphosphate. It functions in the pathway amino-acid biosynthesis; S-adenosyl-L-methionine biosynthesis; S-adenosyl-L-methionine from L-methionine: step 1/1. Its function is as follows. Catalyzes the formation of S-adenosylmethionine (AdoMet) from methionine and ATP. The overall synthetic reaction is composed of two sequential steps, AdoMet formation and the subsequent tripolyphosphate hydrolysis which occurs prior to release of AdoMet from the enzyme. This is S-adenosylmethionine synthase from Aromatoleum aromaticum (strain DSM 19018 / LMG 30748 / EbN1) (Azoarcus sp. (strain EbN1)).